Consider the following 151-residue polypeptide: Large ribosomal subunit protein bL9 (151 aa).

Belongs to the bacterial ribosomal protein bL9 family.

In terms of biological role, binds to the 23S rRNA. The chain is Large ribosomal subunit protein bL9 from Nitrosomonas europaea (strain ATCC 19718 / CIP 103999 / KCTC 2705 / NBRC 14298).